A 562-amino-acid chain; its full sequence is Protein wntless (562 aa).

Topologically, residues 1 to 13 (MSGTILENLSGRK) are cytoplasmic. Residues 14–34 (LSILVSSLLLCQVACFLIGGL) form a helical membrane-spanning segment. The Lumenal portion of the chain corresponds to 35 to 239 (YAPVPAGHQI…AIHQNGGFTQ (205 aa)). Residues Asn58 and Asn103 are each glycosylated (N-linked (GlcNAc...) asparagine). Residues 240–260 (VWLLLKSVLFPFIIGIMVWFW) form a helical membrane-spanning segment. Over 261–270 (RRVHILQRSP) the chain is Cytoplasmic. The helical transmembrane segment at 271 to 291 (ALLEYMLLYLGGALSFLNLPL) threads the bilayer. The Lumenal segment spans residues 292 to 311 (EYLTLSFEMPYMLLLSDVRQ). Residues 312 to 332 (GIFYAMLLSFWLVFAGEHMLI) form a helical membrane-spanning segment. Over 333-344 (QDSPNKSTIRSR) the chain is Cytoplasmic. The chain crosses the membrane as a helical span at residues 345-365 (YWKHLSAVVVGCISLFVFDIC). Residues 366–390 (ERGMQLRNPFYSIWTTPLGAKVAMS) are Lumenal-facing. The helical transmembrane segment at 391–411 (FIVLAGVSAGIYFLFLCYMVW) threads the bilayer. Residues 412–441 (KVFKDIGDKRTSLPSMSQARRLHYEGLIYR) lie on the Cytoplasmic side of the membrane. The helical transmembrane segment at 442 to 462 (FKFLMLATLLCAGLTVAGFIM) threads the bilayer. At 463–482 (GQMAEGHWKWNEDIEIQLTS) the chain is on the lumenal side. Residues 483-503 (AFLTGVYGMWNIYIFALLILY) traverse the membrane as a helical segment. Residues 504 to 562 (APSHKQWPTMRHSDETTQSNENIVASAASEEIEFSNLPSDSNPSEISSLTSFTRKVAFD) are Cytoplasmic-facing. Residues 538 to 562 (SNLPSDSNPSEISSLTSFTRKVAFD) form a disordered region. A compositionally biased stretch (polar residues) spans 539-556 (NLPSDSNPSEISSLTSFT).

It belongs to the wntless family. As to quaternary structure, interacts with wg; in the Golgi. Interacts with Vps35, a component of the retromer complex; wls stability is regulated by Vps35.

It is found in the presynaptic cell membrane. The protein resides in the postsynaptic cell membrane. The protein localises to the cell membrane. It localises to the endoplasmic reticulum membrane. Its subcellular location is the endosome membrane. It is found in the golgi apparatus membrane. Functionally, a segment polarity gene required for wingless (wg)-dependent patterning processes, acting in both wg-sending cells and wg-target cells. In non-neuronal cells wls directs wg secretion. The wls traffic loop encompasses the Golgi, the cell surface, an endocytic compartment and a retrograde route leading back to the Golgi, and involves clathrin-mediated endocytosis and the retromer complex (a conserved protein complex consisting of Vps35 and Vps26). In neuronal cells (the larval motorneuron NMJ), the wg signal moves across the synapse via the release of wls-containing exosome-like vesicles. Postsynaptic wls is required for the trafficking of fz2 through the fz2-interacting protein Grip. This is Protein wntless from Drosophila mojavensis (Fruit fly).